Consider the following 288-residue polypeptide: PAK4-inhibitor inka2 (288 aa).

The interval 159–196 is inka box; it reads DPTDWTTSLLTRGRNRQPLVLGDNSFADLIKNWMDLPE.

This sequence belongs to the INKA family.

It is found in the nucleus. Its function is as follows. Inhibitor of the serine/threonine-protein kinase pak4/pak5. Acts by binding pak4/pak5 in a substrate-like manner, inhibiting the protein kinase activity. This chain is PAK4-inhibitor inka2, found in Danio rerio (Zebrafish).